The sequence spans 351 residues: c-di-GMP synthase (351 aa).

This sequence belongs to the CD-NTase family. E05 subfamily.

The catalysed reaction is 2 GTP = 3',3'-c-di-GMP + 2 diphosphate. Its function is as follows. Cyclic nucleotide synthase (second messenger synthase) of a CBASS antivirus system. CBASS (cyclic oligonucleotide-based antiphage signaling system) provides immunity against bacteriophage. The CD-NTase protein synthesizes cyclic nucleotides in response to infection; these serve as specific second messenger signals. The signals activate a diverse range of effectors, leading to bacterial cell death and thus abortive phage infection. A type I-D(GG) CBASS system. Functionally, cyclic dinucleotide synthase that catalyzes the synthesis of c-di-GMP, has no activity with other NTP substrates. The protein is c-di-GMP synthase (cdnE) of Capnocytophaga granulosa (strain ATCC 51502 / DSM 11449 / JCM 8566 / LMG 16022 / NCTC 12948 / B0611).